The following is a 407-amino-acid chain: Dual-specificity RNA methyltransferase RlmN (407 aa).

Glu-136 acts as the Proton acceptor in catalysis. Residues 144–378 (REDRGAVCIS…MDAGFASPIR (235 aa)) form the Radical SAM core domain. Cysteines 151 and 389 form a disulfide. [4Fe-4S] cluster contacts are provided by Cys-158, Cys-162, and Cys-165. S-adenosyl-L-methionine is bound by residues 215–216 (GE), Ser-247, 269–271 (SLH), and Asn-346. The active-site S-methylcysteine intermediate is Cys-389.

The protein belongs to the radical SAM superfamily. RlmN family. Requires [4Fe-4S] cluster as cofactor.

It is found in the cytoplasm. It catalyses the reaction adenosine(2503) in 23S rRNA + 2 reduced [2Fe-2S]-[ferredoxin] + 2 S-adenosyl-L-methionine = 2-methyladenosine(2503) in 23S rRNA + 5'-deoxyadenosine + L-methionine + 2 oxidized [2Fe-2S]-[ferredoxin] + S-adenosyl-L-homocysteine. It carries out the reaction adenosine(37) in tRNA + 2 reduced [2Fe-2S]-[ferredoxin] + 2 S-adenosyl-L-methionine = 2-methyladenosine(37) in tRNA + 5'-deoxyadenosine + L-methionine + 2 oxidized [2Fe-2S]-[ferredoxin] + S-adenosyl-L-homocysteine. Functionally, specifically methylates position 2 of adenine 2503 in 23S rRNA and position 2 of adenine 37 in tRNAs. m2A2503 modification seems to play a crucial role in the proofreading step occurring at the peptidyl transferase center and thus would serve to optimize ribosomal fidelity. The protein is Dual-specificity RNA methyltransferase RlmN of Gluconobacter oxydans (strain 621H) (Gluconobacter suboxydans).